A 284-amino-acid chain; its full sequence is 2-dehydro-3-deoxyphosphooctonate aldolase (284 aa).

The protein belongs to the KdsA family.

It localises to the cytoplasm. The enzyme catalyses D-arabinose 5-phosphate + phosphoenolpyruvate + H2O = 3-deoxy-alpha-D-manno-2-octulosonate-8-phosphate + phosphate. Its pathway is carbohydrate biosynthesis; 3-deoxy-D-manno-octulosonate biosynthesis; 3-deoxy-D-manno-octulosonate from D-ribulose 5-phosphate: step 2/3. It participates in bacterial outer membrane biogenesis; lipopolysaccharide biosynthesis. The protein is 2-dehydro-3-deoxyphosphooctonate aldolase of Haemophilus influenzae (strain 86-028NP).